A 509-amino-acid chain; its full sequence is Heat shock 70 kDa protein 14-A (509 aa).

This sequence belongs to the heat shock protein 70 family. Component of ribosome-associated complex (RAC).

The protein resides in the cytoplasm. It localises to the cytosol. Component of the ribosome-associated complex (RAC), a complex involved in folding or maintaining nascent polypeptides in a folding-competent state. This Xenopus laevis (African clawed frog) protein is Heat shock 70 kDa protein 14-A (hspa14-a).